We begin with the raw amino-acid sequence, 494 residues long: SNF1-related protein kinase catalytic subunit alpha KIN12 (494 aa).

Residues 19–270 (YRIGKTLGHG…ITEIRQHPWF (252 aa)) form the Protein kinase domain. ATP contacts are provided by residues 25–33 (LGHGSFAKV) and K48. Catalysis depends on D142, which acts as the Proton acceptor. T175 bears the Phosphothreonine mark. Residues 289–386 (AKKIEEEIIQ…GLKSNVKDDK (98 aa)) are auto-inhibitory domain (AID). One can recognise a UBA domain in the interval 291–331 (KIEEEIIQNVVNIGFDRNHVVDSLANRIQNEATVAYHLILD). A regulatory domain (RD) region spans residues 293-494 (EEEIIQNVVN…VAFLRELGVL (202 aa)). The PPI stretch occupies residues 387 to 494 (TWTLGLQSQG…VAFLRELGVL (108 aa)). The 49-residue stretch at 445–493 (AIILPTVIKFEIQLYKVREGKYLLDILRIDGPQFIFFDLCVAFLRELGV) folds into the KA1 domain.

The protein belongs to the protein kinase superfamily. CAMK Ser/Thr protein kinase family. SNF1 subfamily. As to quaternary structure, subunit of a probable heterotrimeric complex consisting of an alpha catalytic subunit, and a beta (KINB) and a gamma (KING or SNF4) non-catalytic regulatory subunits. In terms of processing, autophosphorylated. As to expression, expressed at very low levels.

It catalyses the reaction L-seryl-[protein] + ATP = O-phospho-L-seryl-[protein] + ADP + H(+). The enzyme catalyses L-threonyl-[protein] + ATP = O-phospho-L-threonyl-[protein] + ADP + H(+). Its activity is regulated as follows. Activated by phosphorylation at Thr-175. In terms of biological role, catalytic subunit of the probable trimeric SNF1-related protein kinase (SnRK) complex, a central regulator of cellular energy homeostasis, which, in response to seemingly unrelated darkness, sugar and stress conditions, activates energy-producing pathways and inhibits energy-consuming processes. May also be involved in the regulation of fatty acid synthesis by phosphorylation of acetyl-CoA carboxylase and in assimilation of nitrogen by phosphorylating nitrate reductase. In Arabidopsis thaliana (Mouse-ear cress), this protein is SNF1-related protein kinase catalytic subunit alpha KIN12.